We begin with the raw amino-acid sequence, 299 residues long: UDP-N-acetylenolpyruvoylglucosamine reductase (299 aa).

One can recognise an FAD-binding PCMH-type domain in the interval 28 to 193; the sequence is IGGPVDLMVL…VSALMQLHKE (166 aa). Arg172 is a catalytic residue. Ser222 (proton donor) is an active-site residue. Glu292 is a catalytic residue.

This sequence belongs to the MurB family. FAD serves as cofactor.

The protein localises to the cytoplasm. The catalysed reaction is UDP-N-acetyl-alpha-D-muramate + NADP(+) = UDP-N-acetyl-3-O-(1-carboxyvinyl)-alpha-D-glucosamine + NADPH + H(+). The protein operates within cell wall biogenesis; peptidoglycan biosynthesis. In terms of biological role, cell wall formation. This chain is UDP-N-acetylenolpyruvoylglucosamine reductase, found in Syntrophomonas wolfei subsp. wolfei (strain DSM 2245B / Goettingen).